Consider the following 778-residue polypeptide: Double zinc ribbon and ankyrin repeat-containing protein 1 (778 aa).

S179 and S201 each carry phosphoserine. DZANK-type zinc fingers lie at residues 230–289 (CAHC…CVVC) and 359–407 (CSRC…GSCG). ANK repeat units lie at residues 631–662 (ENKLLLEEVGSSGKGRLSVLEQLLDEGADPNC) and 666–695 (QGRPAVIVAVVNKHYEAIPVLAQRGADIDQ). Residue S768 is modified to Phosphoserine.

In terms of assembly, interacts with NINL. Associates with DYNC1H1 and multiple dynein intermediate and light chains as well as actin-binding proteins.

Its subcellular location is the cytoplasm. It is found in the cytoskeleton. The protein resides in the microtubule organizing center. It localises to the centrosome. The protein localises to the cilium basal body. In terms of biological role, involved in vesicle transport in photoreceptor cells. The chain is Double zinc ribbon and ankyrin repeat-containing protein 1 (Dzank1) from Mus musculus (Mouse).